Here is a 433-residue protein sequence, read N- to C-terminus: Ectonucleoside triphosphate diphosphohydrolase 5 (433 aa).

An N-terminal signal peptide occupies residues 1–24 (MATTWGAAFFMLVASCVCSTVFHR). E172 serves as the catalytic Proton acceptor. N-linked (GlcNAc...) asparagine glycosylation is present at N232. Disulfide bonds link C272/C308 and C368/C382.

This sequence belongs to the GDA1/CD39 NTPase family. In terms of assembly, monomer; active form. Homodimer; disulfide-linked. Homodimers are enzymatically inactive. Ca(2+) is required as a cofactor. It depends on Mg(2+) as a cofactor. N-glycosylated; high-mannose type.

Its subcellular location is the endoplasmic reticulum. The protein resides in the secreted. It catalyses the reaction a ribonucleoside 5'-diphosphate + H2O = a ribonucleoside 5'-phosphate + phosphate + H(+). It carries out the reaction GDP + H2O = GMP + phosphate + H(+). The enzyme catalyses UDP + H2O = UMP + phosphate + H(+). The catalysed reaction is IDP + H2O = IMP + phosphate + H(+). It catalyses the reaction CDP + H2O = CMP + phosphate + H(+). It carries out the reaction ADP + H2O = AMP + phosphate + H(+). Its pathway is protein modification; protein glycosylation. Functionally, hydrolyzes nucleoside diphosphates with a preference for GDP, IDP and UDP compared to ADP and CDP. In the lumen of the endoplasmic reticulum, hydrolyzes UDP that acts as an end-product feedback inhibitor of the UDP-Glc:glycoprotein glucosyltransferases. UMP can be transported back by an UDP-sugar antiporter to the cytosol where it is consumed to regenerate UDP-glucose. Therefore, it positively regulates protein reglucosylation by clearing UDP from the ER lumen and by promoting the regeneration of UDP-glucose. Protein reglucosylation is essential to proper glycoprotein folding and quality control in the ER. This is Ectonucleoside triphosphate diphosphohydrolase 5 (ENTPD5) from Ailuropoda melanoleuca (Giant panda).